A 214-amino-acid polypeptide reads, in one-letter code: Uridine kinase (214 aa).

Residue 11–18 (GGSGSGKT) coordinates ATP.

It belongs to the uridine kinase family.

It localises to the cytoplasm. The enzyme catalyses uridine + ATP = UMP + ADP + H(+). The catalysed reaction is cytidine + ATP = CMP + ADP + H(+). It participates in pyrimidine metabolism; CTP biosynthesis via salvage pathway; CTP from cytidine: step 1/3. It functions in the pathway pyrimidine metabolism; UMP biosynthesis via salvage pathway; UMP from uridine: step 1/1. The protein is Uridine kinase of Brevibacillus brevis (strain 47 / JCM 6285 / NBRC 100599).